The chain runs to 120 residues: Large ribosomal subunit protein bL20 (120 aa).

Belongs to the bacterial ribosomal protein bL20 family.

Its function is as follows. Binds directly to 23S ribosomal RNA and is necessary for the in vitro assembly process of the 50S ribosomal subunit. It is not involved in the protein synthesizing functions of that subunit. This chain is Large ribosomal subunit protein bL20, found in Ureaplasma parvum serovar 3 (strain ATCC 27815 / 27 / NCTC 11736).